We begin with the raw amino-acid sequence, 388 residues long: Chorismate synthase (388 aa).

NADP(+) contacts are provided by Arg39 and Arg45. Residues 130-132 (RSS), 251-252 (NA), Gly296, 311-315 (KPIPT), and Arg337 each bind FMN.

It belongs to the chorismate synthase family. Homotetramer. It depends on FMNH2 as a cofactor.

It catalyses the reaction 5-O-(1-carboxyvinyl)-3-phosphoshikimate = chorismate + phosphate. It participates in metabolic intermediate biosynthesis; chorismate biosynthesis; chorismate from D-erythrose 4-phosphate and phosphoenolpyruvate: step 7/7. In terms of biological role, catalyzes the anti-1,4-elimination of the C-3 phosphate and the C-6 proR hydrogen from 5-enolpyruvylshikimate-3-phosphate (EPSP) to yield chorismate, which is the branch point compound that serves as the starting substrate for the three terminal pathways of aromatic amino acid biosynthesis. This reaction introduces a second double bond into the aromatic ring system. The chain is Chorismate synthase from Streptococcus agalactiae serotype III (strain NEM316).